We begin with the raw amino-acid sequence, 329 residues long: Ribosomal protein L11 methyltransferase (329 aa).

4 residues coordinate S-adenosyl-L-methionine: Thr177, Gly198, Asp220, and Asn264.

It belongs to the methyltransferase superfamily. PrmA family.

Its subcellular location is the cytoplasm. The catalysed reaction is L-lysyl-[protein] + 3 S-adenosyl-L-methionine = N(6),N(6),N(6)-trimethyl-L-lysyl-[protein] + 3 S-adenosyl-L-homocysteine + 3 H(+). Its function is as follows. Methylates ribosomal protein L11. This Helicobacter acinonychis (strain Sheeba) protein is Ribosomal protein L11 methyltransferase.